A 135-amino-acid polypeptide reads, in one-letter code: Holo-[acyl-carrier-protein] synthase (135 aa).

Residues aspartate 8 and glutamate 58 each coordinate Mg(2+).

The protein belongs to the P-Pant transferase superfamily. AcpS family. The cofactor is Mg(2+).

The protein localises to the cytoplasm. It carries out the reaction apo-[ACP] + CoA = holo-[ACP] + adenosine 3',5'-bisphosphate + H(+). In terms of biological role, transfers the 4'-phosphopantetheine moiety from coenzyme A to a Ser of acyl-carrier-protein. The protein is Holo-[acyl-carrier-protein] synthase of Leuconostoc citreum (strain KM20).